The following is a 217-amino-acid chain: Ribonuclease T (217 aa).

The region spanning 20-195 (VVVDVETAGL…YDTERTAMLF (176 aa)) is the Exonuclease domain. Asp-23, Glu-25, His-182, and Asp-187 together coordinate Mg(2+). His-182 serves as the catalytic Proton donor/acceptor.

Belongs to the RNase T family. As to quaternary structure, homodimer. Mg(2+) serves as cofactor.

Its function is as follows. Trims short 3' overhangs of a variety of RNA species, leaving a one or two nucleotide 3' overhang. Responsible for the end-turnover of tRNA: specifically removes the terminal AMP residue from uncharged tRNA (tRNA-C-C-A). Also appears to be involved in tRNA biosynthesis. The polypeptide is Ribonuclease T (Blochmanniella pennsylvanica (strain BPEN)).